Reading from the N-terminus, the 455-residue chain is Chromosomal replication initiator protein DnaA (455 aa).

The domain I, interacts with DnaA modulators stretch occupies residues 1–73 (MTISPQYIWN…LEEVETIVGY (73 aa)). Residues 73-114 (YPIAVKLTTSQEQNLRIVDKNKDNLSSTKLQNKRQQESPKLN) form a domain II region. The tract at residues 115–331 (QLNPRYNFSR…GALIRAVTYI (217 aa)) is domain III, AAA+ region. ATP-binding residues include G159, G161, K162, and T163. The domain IV, binds dsDNA stretch occupies residues 332-455 (SISGLSMTVE…RINIASRNQN (124 aa)).

It belongs to the DnaA family. As to quaternary structure, oligomerizes as a right-handed, spiral filament on DNA at oriC.

Its subcellular location is the cytoplasm. In terms of biological role, plays an essential role in the initiation and regulation of chromosomal replication. ATP-DnaA binds to the origin of replication (oriC) to initiate formation of the DNA replication initiation complex once per cell cycle. Binds the DnaA box (a 9 base pair repeat at the origin) and separates the double-stranded (ds)DNA. Forms a right-handed helical filament on oriC DNA; dsDNA binds to the exterior of the filament while single-stranded (ss)DNA is stabiized in the filament's interior. The ATP-DnaA-oriC complex binds and stabilizes one strand of the AT-rich DNA unwinding element (DUE), permitting loading of DNA polymerase. After initiation quickly degrades to an ADP-DnaA complex that is not apt for DNA replication. Binds acidic phospholipids. The protein is Chromosomal replication initiator protein DnaA of Crocosphaera subtropica (strain ATCC 51142 / BH68) (Cyanothece sp. (strain ATCC 51142)).